Consider the following 98-residue polypeptide: Integration host factor subunit beta (98 aa).

This sequence belongs to the bacterial histone-like protein family. As to quaternary structure, heterodimer of an alpha and a beta chain.

In terms of biological role, this protein is one of the two subunits of integration host factor, a specific DNA-binding protein that functions in genetic recombination as well as in transcriptional and translational control. This chain is Integration host factor subunit beta, found in Marinobacter nauticus (strain ATCC 700491 / DSM 11845 / VT8) (Marinobacter aquaeolei).